Here is a 461-residue protein sequence, read N- to C-terminus: Lysosomal proton-coupled steroid conjugate and bile acid symporter SLC46A3 (461 aa).

A signal peptide spans 1–25 (MKISFIEPAILLYAFAMTLTIPLTA). Residues 26–70 (QYVYRRIWEETGNYTFTSSSNVSECEQNKSSSTFAFQEEVQKKAS) are Extracellular-facing. Asn-38, Asn-46, and Asn-53 each carry an N-linked (GlcNAc...) asparagine glycan. Residues 71 to 91 (LFSLQVEISGLIPGLVSTFML) traverse the membrane as a helical segment. At 92-103 (LSSSDNHGRKLP) the chain is on the cytoplasmic side. Residues 104–124 (MVLSSLGSLGTNLWLCAMSYF) form a helical membrane-spanning segment. At 125-135 (DLPLQLLVAST) the chain is on the extracellular side. A helical transmembrane segment spans residues 136–156 (FIGALFGNYTTFWGACFAYIV). The Cytoplasmic segment spans residues 157 to 170 (DQEKEYKHRIIRIA). A helical transmembrane segment spans residues 171–191 (VLDFMLGVVTGLTGLSSGYFI). Residues 192–197 (RELGFA) lie on the Extracellular side of the membrane. Residues 198-218 (WSYFIIAVVVLVNLAYILFFL) traverse the membrane as a helical segment. Residues 219–260 (SDPIKESSSQIVTMSCSESLKDLFYRTYMLFKNGSCKRRSLL) are Cytoplasmic-facing. A helical membrane pass occupies residues 261-281 (CLLIFTLVVYFFVVFGITPVF). Topologically, residues 282–301 (TLYELGPPLCWNEVYIGYGS) are extracellular. A helical transmembrane segment spans residues 302–322 (ALGSLSFLSSFLGIWLFSYCL). The Cytoplasmic segment spans residues 323-324 (KD). Residues 325-345 (IHIAYVGIFTTMVGMMLTAFT) form a helical membrane-spanning segment. Over 346 to 347 (RT) the chain is Extracellular. A helical transmembrane segment spans residues 348–368 (TLMMFLVRISFFFTIMPLSIL). At 369 to 381 (RSMLSKVVHSTEQ) the chain is on the cytoplasmic side. Residues 382 to 402 (GVLFACIAFLETLGGVTSTSA) traverse the membrane as a helical segment. The Extracellular portion of the chain corresponds to 403–415 (YNGIYSATVAWYP). The helical transmembrane segment at 416-436 (GFVFLLSAGLLVLPAVSLCMV) threads the bilayer. Over 437-461 (KCIGWEEGSYTLLIHDEPSEHTSDS) the chain is Cytoplasmic. The Tyrosine-based lysosomal-sorting motif motif lies at 446-449 (YTLL).

Belongs to the major facilitator superfamily. SLC46A family.

It localises to the lysosome membrane. It catalyses the reaction estrone 3-sulfate(out) + n H(+)(out) = estrone 3-sulfate(in) + n H(+)(in). It carries out the reaction 25-hydroxyvitamin D3 sulfate(out) + n H(+)(out) = 25-hydroxyvitamin D3 sulfate(in) + n H(+)(in). The enzyme catalyses cholate(out) + n H(+)(out) = cholate(in) + n H(+)(in). The catalysed reaction is glycocholate(out) + n H(+)(out) = glycocholate(in) + n H(+)(in). It catalyses the reaction taurocholate(out) + n H(+)(out) = taurocholate(in) + n H(+)(in). It carries out the reaction dehydroepiandrosterone 3-sulfate(out) + n H(+)(out) = dehydroepiandrosterone 3-sulfate(in) + n H(+)(in). The enzyme catalyses N-acetyl-D-muramoyl-L-alanyl-D-isoglutamine(out) + n H(+)(out) = N-acetyl-D-muramoyl-L-alanyl-D-isoglutamine(in) + n H(+)(in). The catalysed reaction is 2',3'-cGAMP(out) + n H(+)(out) = 2',3'-cGAMP(in) + n H(+)(in). Lysosomal proton-coupled steroid conjugate and bile acid transporter. Preferentially recognizes lipophilic steroid conjugates or bile acis as endogenous substrates and seems to mediate escape from lysosomes to the cytoplasm. Modulates hepatic cytosolic copper homeostasis, maybe acting as a lysosomal copper transporter and sequestering copper ions in the lysosome. Delivers pathogen-associated molecular patterns to cytosolic pattern recognition receptors as part of the innate immune response to microbes. Selectively transports bacterial muramyl dipeptide (MDP) into the cytosol for recognition by NOD2, triggering inflammatory responses. Likely acts as a redundant importer of cyclic GMP-AMP dinucleotides (cGAMPs) in monocyte and macrophage cell lineages. The transport mechanism, its electrogenicity and stoichiometry remain to be elucidated. This is Lysosomal proton-coupled steroid conjugate and bile acid symporter SLC46A3 (Slc46a3) from Rattus norvegicus (Rat).